We begin with the raw amino-acid sequence, 396 residues long: Elongation factor Tu 1 (396 aa).

In terms of domain architecture, tr-type G spans K10 to E206. The segment at G19–T26 is G1. G19–T26 contacts GTP. Residue T26 coordinates Mg(2+). The tract at residues G60–N64 is G2. Residues D81 to G84 are G3. Residues D81–H85 and N136–D139 contribute to the GTP site. Residues N136–D139 form a G4 region. A G5 region spans residues S174–L176.

This sequence belongs to the TRAFAC class translation factor GTPase superfamily. Classic translation factor GTPase family. EF-Tu/EF-1A subfamily. In terms of assembly, monomer.

Its subcellular location is the cytoplasm. The catalysed reaction is GTP + H2O = GDP + phosphate + H(+). In terms of biological role, GTP hydrolase that promotes the GTP-dependent binding of aminoacyl-tRNA to the A-site of ribosomes during protein biosynthesis. The protein is Elongation factor Tu 1 of Hyphomonas neptunium (strain ATCC 15444).